Reading from the N-terminus, the 515-residue chain is Probable cytosol aminopeptidase (515 aa).

Lys-279 and Asp-284 together coordinate Mn(2+). Lys-291 is an active-site residue. Residues Asp-302, Asp-361, and Glu-363 each contribute to the Mn(2+) site. Arg-365 is an active-site residue.

The protein belongs to the peptidase M17 family. Requires Mn(2+) as cofactor.

The protein localises to the cytoplasm. It carries out the reaction Release of an N-terminal amino acid, Xaa-|-Yaa-, in which Xaa is preferably Leu, but may be other amino acids including Pro although not Arg or Lys, and Yaa may be Pro. Amino acid amides and methyl esters are also readily hydrolyzed, but rates on arylamides are exceedingly low.. The catalysed reaction is Release of an N-terminal amino acid, preferentially leucine, but not glutamic or aspartic acids.. Its function is as follows. Presumably involved in the processing and regular turnover of intracellular proteins. Catalyzes the removal of unsubstituted N-terminal amino acids from various peptides. The polypeptide is Probable cytosol aminopeptidase (Mycobacterium bovis (strain ATCC BAA-935 / AF2122/97)).